A 362-amino-acid chain; its full sequence is MIIKSIQLSNFRNYEKLDISFDTETNIIYGDNAQGKTNILEAAYLSGTTKSHKGSKDKEMIRFGEDEAHIRTIVEKNDKEYRIDMHLRKNGAKGVAINKMPIKKASELFGILNIVFFSPEDLNIIKNGPAERRRFIDLELCQLDKIYLSNLSKYNKTLVQRNRLLKDIAYRPDLIDTLQVWDMQLLEYGRHVIKKRREFVNELNEIIQDIHSNISGGREKLILKYEPSIDDIFFEDELLKARSRDLKLCQTTVGPHRDDMLFSVDGVDIRKYGSQGQQRTSALSLKLSEISLVKKNINSTPVLLLDDVLSELDGNRQNYLLNSLSDTQTIITCTGLDEFVKNRFQVDKVFHVVKGQVEVIDE.

ATP is bound at residue 30–37 (GDNAQGKT).

Belongs to the RecF family.

It localises to the cytoplasm. Functionally, the RecF protein is involved in DNA metabolism; it is required for DNA replication and normal SOS inducibility. RecF binds preferentially to single-stranded, linear DNA. It also seems to bind ATP. The polypeptide is DNA replication and repair protein RecF (Agathobacter rectalis (strain ATCC 33656 / DSM 3377 / JCM 17463 / KCTC 5835 / VPI 0990) (Eubacterium rectale)).